The chain runs to 370 residues: Quinolinate synthase (370 aa).

Iminosuccinate contacts are provided by histidine 62 and serine 83. Residue cysteine 128 participates in [4Fe-4S] cluster binding. Residues 154-156 (YAN) and serine 171 contribute to the iminosuccinate site. Residue cysteine 215 coordinates [4Fe-4S] cluster. Residues 241-243 (HPE) and threonine 258 each bind iminosuccinate. Cysteine 312 contributes to the [4Fe-4S] cluster binding site.

Belongs to the quinolinate synthase family. Type 1 subfamily. It depends on [4Fe-4S] cluster as a cofactor.

Its subcellular location is the cytoplasm. It catalyses the reaction iminosuccinate + dihydroxyacetone phosphate = quinolinate + phosphate + 2 H2O + H(+). It participates in cofactor biosynthesis; NAD(+) biosynthesis; quinolinate from iminoaspartate: step 1/1. In terms of biological role, catalyzes the condensation of iminoaspartate with dihydroxyacetone phosphate to form quinolinate. This chain is Quinolinate synthase, found in Neisseria meningitidis serogroup C (strain 053442).